The sequence spans 231 residues: Ribose-5-phosphate isomerase A (231 aa).

Residues 32–35 (TGST), 85–88 (DGAD), and 98–101 (KGGG) contribute to the substrate site. Glu107 functions as the Proton acceptor in the catalytic mechanism. Position 125 (Lys125) interacts with substrate.

It belongs to the ribose 5-phosphate isomerase family. Homodimer.

It carries out the reaction aldehydo-D-ribose 5-phosphate = D-ribulose 5-phosphate. It participates in carbohydrate degradation; pentose phosphate pathway; D-ribose 5-phosphate from D-ribulose 5-phosphate (non-oxidative stage): step 1/1. Functionally, catalyzes the reversible conversion of ribose-5-phosphate to ribulose 5-phosphate. In Burkholderia orbicola (strain MC0-3), this protein is Ribose-5-phosphate isomerase A.